We begin with the raw amino-acid sequence, 334 residues long: UDP-glucose 4-epimerase (334 aa).

NAD(+) contacts are provided by residues 11–12, 31–36, 50–51, 72–76, N91, T116, Y140, K144, and F168; these read YI, DNLQKG, DI, and FAANS. Substrate contacts are provided by T116 and Y140. Catalysis depends on Y140, which acts as the Proton acceptor. Substrate contacts are provided by residues N169, 188–189, 205–207, R220, and 281–284; these read HL, AIF, and RSGD.

The protein belongs to the NAD(P)-dependent epimerase/dehydratase family. Homodimer. It depends on NAD(+) as a cofactor.

The enzyme catalyses UDP-alpha-D-glucose = UDP-alpha-D-galactose. Its pathway is carbohydrate metabolism; galactose metabolism. In terms of biological role, involved in the metabolism of galactose. Catalyzes the conversion of UDP-galactose (UDP-Gal) to UDP-glucose (UDP-Glc) through a mechanism involving the transient reduction of NAD. The polypeptide is UDP-glucose 4-epimerase (galE) (Halalkalibacterium halodurans (strain ATCC BAA-125 / DSM 18197 / FERM 7344 / JCM 9153 / C-125) (Bacillus halodurans)).